Here is a 416-residue protein sequence, read N- to C-terminus: Multifunctional CCA protein (416 aa).

Positions 8 and 11 each coordinate ATP. CTP-binding residues include Gly-8 and Arg-11. Positions 21 and 23 each coordinate Mg(2+). Residues Arg-91, Arg-137, and Arg-140 each contribute to the ATP site. Residues Arg-91, Arg-137, and Arg-140 each contribute to the CTP site. The HD domain occupies Thr-226–Phe-327.

This sequence belongs to the tRNA nucleotidyltransferase/poly(A) polymerase family. Bacterial CCA-adding enzyme type 1 subfamily. In terms of assembly, monomer. Can also form homodimers and oligomers. Requires Mg(2+) as cofactor. It depends on Ni(2+) as a cofactor.

The enzyme catalyses a tRNA precursor + 2 CTP + ATP = a tRNA with a 3' CCA end + 3 diphosphate. It carries out the reaction a tRNA with a 3' CCA end + 2 CTP + ATP = a tRNA with a 3' CCACCA end + 3 diphosphate. Functionally, catalyzes the addition and repair of the essential 3'-terminal CCA sequence in tRNAs without using a nucleic acid template. Adds these three nucleotides in the order of C, C, and A to the tRNA nucleotide-73, using CTP and ATP as substrates and producing inorganic pyrophosphate. tRNA 3'-terminal CCA addition is required both for tRNA processing and repair. Also involved in tRNA surveillance by mediating tandem CCA addition to generate a CCACCA at the 3' terminus of unstable tRNAs. While stable tRNAs receive only 3'-terminal CCA, unstable tRNAs are marked with CCACCA and rapidly degraded. In Janthinobacterium sp. (strain Marseille) (Minibacterium massiliensis), this protein is Multifunctional CCA protein.